The primary structure comprises 294 residues: N-acetylmuramic acid 6-phosphate etherase (294 aa).

In terms of domain architecture, SIS spans 54 to 217 (VTKSFEEEGR…STASMIGVGK (164 aa)). The active-site Proton donor is Glu-82. Glu-113 is an active-site residue.

Belongs to the GCKR-like family. MurNAc-6-P etherase subfamily. As to quaternary structure, homodimer.

It catalyses the reaction N-acetyl-D-muramate 6-phosphate + H2O = N-acetyl-D-glucosamine 6-phosphate + (R)-lactate. It participates in amino-sugar metabolism; N-acetylmuramate degradation. Its function is as follows. Specifically catalyzes the cleavage of the D-lactyl ether substituent of MurNAc 6-phosphate, producing GlcNAc 6-phosphate and D-lactate. The sequence is that of N-acetylmuramic acid 6-phosphate etherase from Bacillus mycoides (strain KBAB4) (Bacillus weihenstephanensis).